The following is a 452-amino-acid chain: Aspartyl/glutamyl-tRNA(Asn/Gln) amidotransferase subunit B (452 aa).

Belongs to the GatB/GatE family. GatB subfamily. As to quaternary structure, heterotrimer of A, B and C subunits.

The enzyme catalyses L-glutamyl-tRNA(Gln) + L-glutamine + ATP + H2O = L-glutaminyl-tRNA(Gln) + L-glutamate + ADP + phosphate + H(+). The catalysed reaction is L-aspartyl-tRNA(Asn) + L-glutamine + ATP + H2O = L-asparaginyl-tRNA(Asn) + L-glutamate + ADP + phosphate + 2 H(+). Its function is as follows. Allows the formation of correctly charged Asn-tRNA(Asn) or Gln-tRNA(Gln) through the transamidation of misacylated Asp-tRNA(Asn) or Glu-tRNA(Gln) in organisms which lack either or both of asparaginyl-tRNA or glutaminyl-tRNA synthetases. The reaction takes place in the presence of glutamine and ATP through an activated phospho-Asp-tRNA(Asn) or phospho-Glu-tRNA(Gln). The sequence is that of Aspartyl/glutamyl-tRNA(Asn/Gln) amidotransferase subunit B from Methanosphaera stadtmanae (strain ATCC 43021 / DSM 3091 / JCM 11832 / MCB-3).